Reading from the N-terminus, the 186-residue chain is Protein Syd (186 aa).

Belongs to the Syd family.

The protein resides in the cell inner membrane. Interacts with the SecY protein in vivo. May bind preferentially to an uncomplexed state of SecY, thus functioning either as a chelating agent for excess SecY in the cell or as a regulatory factor that negatively controls the translocase function. This Pseudoalteromonas atlantica (strain T6c / ATCC BAA-1087) protein is Protein Syd.